The primary structure comprises 224 residues: Uracil-DNA glycosylase 2 (224 aa).

The active-site Proton acceptor is the Asp-64.

It belongs to the uracil-DNA glycosylase (UDG) superfamily. UNG family.

The protein localises to the cytoplasm. The catalysed reaction is Hydrolyzes single-stranded DNA or mismatched double-stranded DNA and polynucleotides, releasing free uracil.. Its function is as follows. Excises uracil residues from the DNA which can arise as a result of misincorporation of dUMP residues by DNA polymerase or due to deamination of cytosine. The chain is Uracil-DNA glycosylase 2 from Listeria monocytogenes serovar 1/2a (strain ATCC BAA-679 / EGD-e).